The chain runs to 125 residues: Cu-Zn superoxide dismutase-like protein OPG175 (125 aa).

A disulfide bridge links Cys52 with Cys102.

It belongs to the Cu-Zn superoxide dismutase family.

It localises to the virion. It is found in the host cytoplasm. Superoxide dismutase-like protein with no enzymatic activity. This chain is Cu-Zn superoxide dismutase-like protein OPG175 (OPG175), found in Vaccinia virus (strain Western Reserve) (VACV).